The sequence spans 340 residues: Nicotianamine synthase 9 (340 aa).

This sequence belongs to the nicotianamine synthase (NAS)-like family. As to quaternary structure, homotrimer.

The catalysed reaction is 3 S-adenosyl-L-methionine = nicotianamine + 3 S-methyl-5'-thioadenosine + 3 H(+). Its function is as follows. Synthesizes nicotianamine, a polyamine that is the first intermediate in the synthesis of the phytosiderophores of the mugineic acid type found in gramineae which serves as a sensor for the physiological iron status within the plant, and/or might be involved in the transport of iron. The chain is Nicotianamine synthase 9 (NAS9) from Hordeum vulgare (Barley).